We begin with the raw amino-acid sequence, 138 residues long: Large ribosomal subunit protein uL16 (138 aa).

Residues 1–13 (MLQPSRRKYRKEQ) show a composition bias toward basic residues. Residues 1 to 24 (MLQPSRRKYRKEQKGRNTGLASRG) form a disordered region.

The protein belongs to the universal ribosomal protein uL16 family. In terms of assembly, part of the 50S ribosomal subunit.

Functionally, binds 23S rRNA and is also seen to make contacts with the A and possibly P site tRNAs. The polypeptide is Large ribosomal subunit protein uL16 (Bordetella bronchiseptica (strain ATCC BAA-588 / NCTC 13252 / RB50) (Alcaligenes bronchisepticus)).